The sequence spans 103 residues: Putative membrane protein insertion efficiency factor (103 aa).

A disordered region spans residues 68-103 (HEGGYDPVPLAKQDAKPENNSESESLLNQPTETKSL). Positions 87–103 (NSESESLLNQPTETKSL) are enriched in polar residues.

This sequence belongs to the UPF0161 family.

The protein localises to the cell inner membrane. Its function is as follows. Could be involved in insertion of integral membrane proteins into the membrane. This Idiomarina loihiensis (strain ATCC BAA-735 / DSM 15497 / L2-TR) protein is Putative membrane protein insertion efficiency factor.